A 317-amino-acid chain; its full sequence is tRNA dimethylallyltransferase (317 aa).

Residue 14–21 (GPTAVGKT) coordinates ATP. Residue 16–21 (TAVGKT) coordinates substrate. Positions 39–42 (DSMQ) are interaction with substrate tRNA.

The protein belongs to the IPP transferase family. In terms of assembly, monomer. Mg(2+) is required as a cofactor.

The enzyme catalyses adenosine(37) in tRNA + dimethylallyl diphosphate = N(6)-dimethylallyladenosine(37) in tRNA + diphosphate. Functionally, catalyzes the transfer of a dimethylallyl group onto the adenine at position 37 in tRNAs that read codons beginning with uridine, leading to the formation of N6-(dimethylallyl)adenosine (i(6)A). This is tRNA dimethylallyltransferase from Bacillus cereus (strain AH820).